A 590-amino-acid chain; its full sequence is Oleate hydratase (590 aa).

Residues alanine 33, glutamate 56, serine 64, and glutamate 82 each contribute to the FAD site. Glutamate 82 serves as the catalytic Proton acceptor. Tyrosine 200 (proton donor) is an active-site residue. FAD contacts are provided by valine 249, serine 291, threonine 508, and serine 512.

Belongs to the oleate hydratase family. As to quaternary structure, monomer and homodimer. Both forms seem to be active. FAD is required as a cofactor.

It carries out the reaction (R)-10-hydroxyoctadecanoate = (9Z)-octadecenoate + H2O. The enzyme catalyses (9Z)-octadecenoate + H2O = 10-hydroxyoctadecanoate. The catalysed reaction is (9Z)-hexadecenoate + H2O = 10-hydroxyhexadecanoate. It catalyses the reaction (9Z,12Z)-octadecadienoate + H2O = (12Z)-10-hydroxyoctadecenoate. It carries out the reaction (12Z)-10-hydroxyoctadecenoate + H2O = 10,13-dihydroxyoctadecanoate. The enzyme catalyses (9Z,12Z,15Z)-octadecatrienoate + H2O = (12Z,15Z)-10-hydroxyoctadecadienoate. Its pathway is lipid metabolism; fatty acid metabolism. In terms of biological role, catalyzes the hydration of oleate at its cis-9-double bond to yield 10-hydroxyoctadecanoate, probably in the (R) configuration, and of linoleate at its cis-9- and cis-12-double bond to yield 10-hydroxy-12-octadecenoate and 10,13-dihydroxyoctadecanoate. Is not active on trans-double bonds and esterified fatty acids as substrate; is only active on cis-9- and/or cis-12-double bond of C16 and C18 fatty acids without any trans-configurations, producing 10-hydroxy and 10,13-dihydroxy derivatives. Appears to play a role in oleic acid detoxification and bacterial virulence. The polypeptide is Oleate hydratase (sph) (Streptococcus pyogenes serotype M49 (strain NZ131)).